The following is a 465-amino-acid chain: ATP synthase subunit beta (465 aa).

152–159 (GGAGVGKT) serves as a coordination point for ATP.

This sequence belongs to the ATPase alpha/beta chains family. In terms of assembly, F-type ATPases have 2 components, CF(1) - the catalytic core - and CF(0) - the membrane proton channel. CF(1) has five subunits: alpha(3), beta(3), gamma(1), delta(1), epsilon(1). CF(0) has three main subunits: a(1), b(2) and c(9-12). The alpha and beta chains form an alternating ring which encloses part of the gamma chain. CF(1) is attached to CF(0) by a central stalk formed by the gamma and epsilon chains, while a peripheral stalk is formed by the delta and b chains.

It is found in the cell membrane. The enzyme catalyses ATP + H2O + 4 H(+)(in) = ADP + phosphate + 5 H(+)(out). In terms of biological role, produces ATP from ADP in the presence of a proton gradient across the membrane. The catalytic sites are hosted primarily by the beta subunits. This is ATP synthase subunit beta from Desulfitobacterium hafniense (strain Y51).